The following is a 295-amino-acid chain: UDP-N-acetylenolpyruvoylglucosamine reductase (295 aa).

Residues 23–188 (KVGGPADFLA…ISAKFALKPG (166 aa)) form the FAD-binding PCMH-type domain. Arg-167 is a catalytic residue. Residue Ser-217 is the Proton donor of the active site. The active site involves Glu-287.

The protein belongs to the MurB family. Requires FAD as cofactor.

The protein resides in the cytoplasm. It catalyses the reaction UDP-N-acetyl-alpha-D-muramate + NADP(+) = UDP-N-acetyl-3-O-(1-carboxyvinyl)-alpha-D-glucosamine + NADPH + H(+). It participates in cell wall biogenesis; peptidoglycan biosynthesis. Its function is as follows. Cell wall formation. This is UDP-N-acetylenolpyruvoylglucosamine reductase from Streptococcus pyogenes serotype M3 (strain ATCC BAA-595 / MGAS315).